Consider the following 1015-residue polypeptide: SPOC domain-containing protein 1 (1015 aa).

Disordered regions lie at residues M73 to L97, G118 to G159, L213 to E320, and A344 to L406. Residues S304–E320 are compositionally biased toward basic and acidic residues. The span at A373–P382 shows a compositional bias: polar residues. Residues A388–D397 show a composition bias toward basic and acidic residues. One can recognise a TFIIS central domain in the interval V410–Y530. The interval I643–P685 is disordered. One can recognise an SPOC domain in the interval W688–P791. Disordered regions lie at residues P858–G906 and Q967–C1015. Residues Q967–V978 show a composition bias toward polar residues.

In terms of assembly, interacts with DNMT3A, DNMT3C and DNMT3L. Interacts with C19orf84 homolog. Interacts with SPIN1; promoting recruitment to transposons marked with histone H3 trimethylated at both 'Lys-4' and 'Lys-9' (H3K4me3K9me3).

Its subcellular location is the nucleus. The protein resides in the chromosome. In terms of biological role, protein adapter that acts as an essential executor of PIWIL4-piRNA pathway directed transposon DNA methylation and silencing in the male embryonic germ cells. Recruited to young transposons, which are specifically marked with histone H3 trimethylated at both 'Lys-4' and 'Lys-9' (H3K4me3K9me3), via its association with SPIN1 chromatin reader, and associates with the de novo DNA methylation machinery and repressive chromatin remodeling complexes. Following this, PIWIL4 engages with nascent transposable element transcript to direct piRNA-directed DNA methylation. Not required for piRNA biosynthesis. The polypeptide is SPOC domain-containing protein 1 (Mus musculus (Mouse)).